A 276-amino-acid chain; its full sequence is uncharacterized protein (276 aa).

The first 16 residues, 1 to 16, serve as a signal peptide directing secretion; that stretch reads MELGLILMFASAFVSA. Asn265 carries an N-linked (GlcNAc...) asparagine glycan.

This is an uncharacterized protein from Encephalitozoon cuniculi (strain GB-M1) (Microsporidian parasite).